A 235-amino-acid chain; its full sequence is Ribonuclease S-2 (235 aa).

The N-terminal stretch at 1-31 (MATVQKSQHSHFFLLVGCIVHLSNFCSTTTA) is a signal peptide. Q41 is an RNA binding site. The cysteines at positions 47 and 54 are disulfide-linked. H66 provides a ligand contact to RNA. Catalysis depends on H66, which acts as the Proton donor. Residue N72 is glycosylated (N-linked (GlcNAc...) asparagine). Disulfide bonds link C80–C129, C189–C217, and C200–C211. RNA is bound by residues 105–106 (DL), R108, and F118. The active site involves Q122. 125-126 (KH) contacts RNA. H126 (proton acceptor) is an active-site residue.

This sequence belongs to the RNase T2 family.

It is found in the secreted. The protein resides in the extracellular space. The enzyme catalyses a ribonucleotidyl-ribonucleotide-RNA + H2O = a 3'-end 3'-phospho-ribonucleotide-RNA + a 5'-end dephospho-ribonucleoside-RNA + H(+). Self-incompatibility (SI) is the inherited ability of a flowering plant to prevent self-fertilization by discriminating between self and non-self pollen during pollination. In many species, self-incompatibility is controlled by the single, multiallelic locus S. The protein is Ribonuclease S-2 (S2) of Antirrhinum hispanicum (Snapdragon).